We begin with the raw amino-acid sequence, 1227 residues long: Beta-alanyl-bioamine nonribosomal peptide synthetase (1227 aa).

The adenylation stretch occupies residues 1–850 (MPQSTAQLKS…FGKNSRDFKL (850 aa)). The region spanning 851–931 (SRGRERARKV…SILTSLQNTE (81 aa)) is the Carrier domain. Ser892 carries the O-(pantetheine 4'-phosphoryl)serine modification. Residues 932–1227 (SDFLKTQEPF…YMIKELNPSS (296 aa)) form a condensation region.

This sequence belongs to the NRP synthetase family. The cofactor is pantetheine 4'-phosphate. In virgin and paired males, bilaterally expressed in some cells in the head. During pairing, expressed throughout the ventral side of the body probably in ciliated neurons. Highly expressed in virgin females in cells throughout the body and only weakly expressed in sexually mature females. In virgin females, expressed in some cells in the head and on the dorsal surface and lateral edges of body.

The catalysed reaction is tryptamine + beta-alanine + ATP = beta-alanyl-tryptamine + AMP + diphosphate + H(+). It carries out the reaction beta-alanine + ATP + H(+) = beta-alanyl-5'-AMP + diphosphate. It catalyses the reaction beta-alanyl-5'-AMP + holo-[peptidyl-carrier protein] = beta-alanyl-[peptidyl-carrier protein] + AMP + H(+). The enzyme catalyses beta-alanyl-[peptidyl-carrier protein] + tryptamine = beta-alanyl-tryptamine + holo-[peptidyl-carrier protein] + H(+). Its function is as follows. Catalyzes the condensation of beta-alanine with tryptamine to form beta-alanyl-tryptamine (BATT). Beta-alanyl-tryptamine is an essential pheromone produced by the male that stimulates female sexual development during pairing. In Schistosoma mansoni (Blood fluke), this protein is Beta-alanyl-bioamine nonribosomal peptide synthetase.